Consider the following 232-residue polypeptide: Orotidine 5'-phosphate decarboxylase (232 aa).

Substrate is bound by residues Asp-16, Lys-38, 65-74, Thr-119, Arg-180, Gln-189, Gly-209, and Arg-210; that span reads DLKLHDIGNT. The Proton donor role is filled by Lys-67.

Belongs to the OMP decarboxylase family. Type 1 subfamily. In terms of assembly, homodimer.

The catalysed reaction is orotidine 5'-phosphate + H(+) = UMP + CO2. It participates in pyrimidine metabolism; UMP biosynthesis via de novo pathway; UMP from orotate: step 2/2. Its function is as follows. Catalyzes the decarboxylation of orotidine 5'-monophosphate (OMP) to uridine 5'-monophosphate (UMP). In Methylorubrum extorquens (strain PA1) (Methylobacterium extorquens), this protein is Orotidine 5'-phosphate decarboxylase.